Reading from the N-terminus, the 226-residue chain is Cytidylate kinase (226 aa).

Residue 10-18 (GPASSGKST) participates in ATP binding.

This sequence belongs to the cytidylate kinase family. Type 1 subfamily.

Its subcellular location is the cytoplasm. It carries out the reaction CMP + ATP = CDP + ADP. The catalysed reaction is dCMP + ATP = dCDP + ADP. This chain is Cytidylate kinase, found in Streptococcus equi subsp. zooepidemicus (strain MGCS10565).